The sequence spans 208 residues: Pyridoxine/pyridoxamine 5'-phosphate oxidase (208 aa).

Residues 53 to 58 (RTVLLK), 68 to 69 (YS), lysine 75, and glutamine 100 contribute to the FMN site. Lysine 58 lines the substrate pocket. Substrate is bound by residues tyrosine 118, arginine 122, and serine 126. FMN is bound by residues 135 to 136 (QS) and tryptophan 180. 186–188 (RLH) contributes to the substrate binding site. Arginine 190 is an FMN binding site.

This sequence belongs to the pyridoxamine 5'-phosphate oxidase family. Homodimer. It depends on FMN as a cofactor.

It carries out the reaction pyridoxamine 5'-phosphate + O2 + H2O = pyridoxal 5'-phosphate + H2O2 + NH4(+). It catalyses the reaction pyridoxine 5'-phosphate + O2 = pyridoxal 5'-phosphate + H2O2. It participates in cofactor metabolism; pyridoxal 5'-phosphate salvage; pyridoxal 5'-phosphate from pyridoxamine 5'-phosphate: step 1/1. The protein operates within cofactor metabolism; pyridoxal 5'-phosphate salvage; pyridoxal 5'-phosphate from pyridoxine 5'-phosphate: step 1/1. Functionally, catalyzes the oxidation of either pyridoxine 5'-phosphate (PNP) or pyridoxamine 5'-phosphate (PMP) into pyridoxal 5'-phosphate (PLP). This Xylella fastidiosa (strain 9a5c) protein is Pyridoxine/pyridoxamine 5'-phosphate oxidase.